We begin with the raw amino-acid sequence, 153 residues long: Small ribosomal subunit protein uS9 (153 aa).

The disordered stretch occupies residues 122 to 153 (KKAGFLTRDPRSTERKKYGLKKARKAPQYSKR). The span at 129 to 138 (RDPRSTERKK) shows a compositional bias: basic and acidic residues. The segment covering 139–153 (YGLKKARKAPQYSKR) has biased composition (basic residues).

The protein belongs to the universal ribosomal protein uS9 family.

This Mycobacterium leprae (strain TN) protein is Small ribosomal subunit protein uS9 (rpsI).